A 284-amino-acid polypeptide reads, in one-letter code: Polyamine aminopropyltransferase (284 aa).

The 236-residue stretch at 2–237 folds into the PABS domain; that stretch reads ELWYTEQHTE…GHWLFGFASK (236 aa). Glutamine 31 contacts S-methyl-5'-thioadenosine. Spermidine contacts are provided by histidine 62 and aspartate 86. S-methyl-5'-thioadenosine contacts are provided by residues glutamate 106 and 137–138; that span reads DG. Aspartate 155 serves as the catalytic Proton acceptor. Residue 155–158 participates in spermidine binding; sequence DSTD. An S-methyl-5'-thioadenosine-binding site is contributed by proline 162.

The protein belongs to the spermidine/spermine synthase family. As to quaternary structure, homodimer or homotetramer.

The protein localises to the cytoplasm. The enzyme catalyses S-adenosyl 3-(methylsulfanyl)propylamine + putrescine = S-methyl-5'-thioadenosine + spermidine + H(+). It participates in amine and polyamine biosynthesis; spermidine biosynthesis; spermidine from putrescine: step 1/1. In terms of biological role, catalyzes the irreversible transfer of a propylamine group from the amino donor S-adenosylmethioninamine (decarboxy-AdoMet) to putrescine (1,4-diaminobutane) to yield spermidine. The protein is Polyamine aminopropyltransferase of Clostridium beijerinckii (strain ATCC 51743 / NCIMB 8052) (Clostridium acetobutylicum).